A 97-amino-acid polypeptide reads, in one-letter code: Small ribosomal subunit protein bS6 (97 aa).

It belongs to the bacterial ribosomal protein bS6 family.

Binds together with bS18 to 16S ribosomal RNA. The protein is Small ribosomal subunit protein bS6 of Dictyoglomus turgidum (strain DSM 6724 / Z-1310).